The primary structure comprises 666 residues: Protein SLY1 (666 aa).

Repeat copies occupy residues 106–142 (KENI…DLAQ), 220–257 (KGGP…DSLE), 436–474 (LDIL…QNVE), and 478–514 (KEND…DGSD). Residues 106–514 (KENIDIIVND…QNKSLEDGSD (409 aa)) are 4 X approximate repeats.

This sequence belongs to the STXBP/unc-18/SEC1 family. Interacts with SED5.

Its subcellular location is the cytoplasm. The protein resides in the membrane. Able to suppress the functional loss of YPT1. SLY1 is essential for cell viability. May interact indirectly, or directly with YPT1. This is Protein SLY1 (SLY1) from Saccharomyces cerevisiae (strain ATCC 204508 / S288c) (Baker's yeast).